Here is a 328-residue protein sequence, read N- to C-terminus: Cytochrome c biogenesis protein CcsA (328 aa).

8 helical membrane passes run 15-35, 36-56, 68-88, 97-117, 142-162, 236-256, 263-283, and 297-317; these read FLVLFLTMLVYWAGAAFPSIP, LLPGLGSTGVAIANLCIAALL, ISNLYESLFFLAWGVTAVHLI, LVGVVTTPVAMGITAFATLSL, VMMLSYAALMVGSLMAIAFLI, VIGLGFPLLTIGIIAGAVWAN, WSWDPKETWALITWLVFAAYL, and AILAASGFVVVWVCYLGVNLL.

The protein belongs to the CcmF/CycK/Ccl1/NrfE/CcsA family. May interact with ccs1.

The protein resides in the cellular thylakoid membrane. Required during biogenesis of c-type cytochromes (cytochrome c6 and cytochrome f) at the step of heme attachment. This is Cytochrome c biogenesis protein CcsA from Microcystis aeruginosa (strain NIES-843 / IAM M-2473).